The primary structure comprises 410 residues: Adenosylhomocysteinase (410 aa).

Residues Asp117 and Glu142 each contribute to the substrate site. NAD(+) is bound at residue 143–145 (TTT). 2 residues coordinate substrate: Lys172 and Asp176. Residues Asn177, 206-211 (GYGYCG), Glu229, 285-287 (AGH), and Asn332 each bind NAD(+).

Belongs to the adenosylhomocysteinase family. NAD(+) serves as cofactor.

Its subcellular location is the cytoplasm. It catalyses the reaction S-adenosyl-L-homocysteine + H2O = L-homocysteine + adenosine. It functions in the pathway amino-acid biosynthesis; L-homocysteine biosynthesis; L-homocysteine from S-adenosyl-L-homocysteine: step 1/1. May play a key role in the regulation of the intracellular concentration of adenosylhomocysteine. In Thermoplasma volcanium (strain ATCC 51530 / DSM 4299 / JCM 9571 / NBRC 15438 / GSS1), this protein is Adenosylhomocysteinase.